Consider the following 217-residue polypeptide: Probable transaldolase (217 aa).

The active-site Schiff-base intermediate with substrate is Lys-83.

It belongs to the transaldolase family. Type 3B subfamily.

The protein resides in the cytoplasm. It carries out the reaction D-sedoheptulose 7-phosphate + D-glyceraldehyde 3-phosphate = D-erythrose 4-phosphate + beta-D-fructose 6-phosphate. The protein operates within carbohydrate degradation; pentose phosphate pathway; D-glyceraldehyde 3-phosphate and beta-D-fructose 6-phosphate from D-ribose 5-phosphate and D-xylulose 5-phosphate (non-oxidative stage): step 2/3. Its function is as follows. Transaldolase is important for the balance of metabolites in the pentose-phosphate pathway. In Bartonella quintana (strain Toulouse) (Rochalimaea quintana), this protein is Probable transaldolase.